Here is a 72-residue protein sequence, read N- to C-terminus: UPF0352 protein CGSHiGG_07710 (72 aa).

Belongs to the UPF0352 family.

The polypeptide is UPF0352 protein CGSHiGG_07710 (Haemophilus influenzae (strain PittGG)).